We begin with the raw amino-acid sequence, 355 residues long: tRNA N6-adenosine threonylcarbamoyltransferase (355 aa).

Histidine 111 and histidine 115 together coordinate Fe cation. Substrate is bound by residues leucine 134 to glycine 138, aspartate 167, glycine 180, aspartate 184, and asparagine 279. Aspartate 307 serves as a coordination point for Fe cation.

The protein belongs to the KAE1 / TsaD family. The cofactor is Fe(2+).

It is found in the cytoplasm. The catalysed reaction is L-threonylcarbamoyladenylate + adenosine(37) in tRNA = N(6)-L-threonylcarbamoyladenosine(37) in tRNA + AMP + H(+). In terms of biological role, required for the formation of a threonylcarbamoyl group on adenosine at position 37 (t(6)A37) in tRNAs that read codons beginning with adenine. Is involved in the transfer of the threonylcarbamoyl moiety of threonylcarbamoyl-AMP (TC-AMP) to the N6 group of A37, together with TsaE and TsaB. TsaD likely plays a direct catalytic role in this reaction. This is tRNA N6-adenosine threonylcarbamoyltransferase from Picosynechococcus sp. (strain ATCC 27264 / PCC 7002 / PR-6) (Agmenellum quadruplicatum).